The sequence spans 191 residues: MEDQDAAFIKQATEAIVDVSLNIDNIDPIIKELLERVRNRQNRLQNKKPALIPAENGVDINSQGGNIKVKKENALPKPPKSSKSKPQDRRNSTGEKRFKCAKCSLEFSRSSDLRRHEKTHFAILPNICPQCGKGFARKDALKRHYDTLTCRRNRTKLLTAGGEGINELLKKVKQSNIVHRQDNNHNGSSNG.

A disordered region spans residues 70-96; sequence KKENALPKPPKSSKSKPQDRRNSTGEK. The segment covering 85-96 has biased composition (basic and acidic residues); that stretch reads KPQDRRNSTGEK. The segment at 98–120 adopts a C2H2-type 1 zinc-finger fold; sequence FKCAKCSLEFSRSSDLRRHEKTH. The segment at 126 to 150 adopts a C2H2-type 2; atypical zinc-finger fold; that stretch reads NICPQCGKGFARKDALKRHYDTLTC.

Interacts with MET4 and MET28.

Its subcellular location is the cytoplasm. It is found in the nucleus. Its function is as follows. Auxiliary transcriptional regulator of sulfur amino acid metabolism. Involved in the transcriptional activation of MET28. This chain is Transcriptional regulator MET32 (MET32), found in Saccharomyces cerevisiae (strain ATCC 204508 / S288c) (Baker's yeast).